A 285-amino-acid polypeptide reads, in one-letter code: MSAHLIDGNALAKQIRAEAAQRAARLTAAGHQPGLAVVLVGEDPASQVYVRNKVKACEDNGFYSSLNRYPADLSEADLLARIDELNNDPKIHGILVQLPLPKHIDSHKVLEAIAPEKDVDGFHVANAGALMTGAPLFRPCTPYGCMKMLESIQYPLRGARAVVVGASNIVGKPMAMMLLQAGATVTICNSKTRDLAAHTRDADVIVAAVGRRNIITADIVKPGAVVIDVGMNRDDAGKLCGDVDFAGVREVAGHITPVPGGVGPMTITMLLINTLEAAEREAGIA.

Residues 165-167 and serine 190 each bind NADP(+); that span reads GAS.

It belongs to the tetrahydrofolate dehydrogenase/cyclohydrolase family. In terms of assembly, homodimer.

The catalysed reaction is (6R)-5,10-methylene-5,6,7,8-tetrahydrofolate + NADP(+) = (6R)-5,10-methenyltetrahydrofolate + NADPH. The enzyme catalyses (6R)-5,10-methenyltetrahydrofolate + H2O = (6R)-10-formyltetrahydrofolate + H(+). It participates in one-carbon metabolism; tetrahydrofolate interconversion. Its function is as follows. Catalyzes the oxidation of 5,10-methylenetetrahydrofolate to 5,10-methenyltetrahydrofolate and then the hydrolysis of 5,10-methenyltetrahydrofolate to 10-formyltetrahydrofolate. This chain is Bifunctional protein FolD, found in Cupriavidus metallidurans (strain ATCC 43123 / DSM 2839 / NBRC 102507 / CH34) (Ralstonia metallidurans).